Consider the following 258-residue polypeptide: Large ribosomal subunit protein uL15c (258 aa).

Residues 1–65 (MSAASLIPVS…NVKSSGENVR (65 aa)) constitute a chloroplast transit peptide. The tract at residues 67 to 90 (RLDNLGPQPGSRKRPKRKGRGIAA) is disordered. The segment covering 77-86 (SRKRPKRKGR) has biased composition (basic residues).

It belongs to the universal ribosomal protein uL15 family. As to quaternary structure, part of the 50S ribosomal subunit.

Its subcellular location is the plastid. The protein localises to the chloroplast. In Pisum sativum (Garden pea), this protein is Large ribosomal subunit protein uL15c (RPL15).